A 293-amino-acid polypeptide reads, in one-letter code: ATP synthase gamma chain (293 aa).

The protein belongs to the ATPase gamma chain family. As to quaternary structure, F-type ATPases have 2 components, CF(1) - the catalytic core - and CF(0) - the membrane proton channel. CF(1) has five subunits: alpha(3), beta(3), gamma(1), delta(1), epsilon(1). CF(0) has three main subunits: a, b and c.

The protein resides in the cell inner membrane. Produces ATP from ADP in the presence of a proton gradient across the membrane. The gamma chain is believed to be important in regulating ATPase activity and the flow of protons through the CF(0) complex. The chain is ATP synthase gamma chain from Nitratidesulfovibrio vulgaris (strain DSM 19637 / Miyazaki F) (Desulfovibrio vulgaris).